The following is a 133-amino-acid chain: Interferon alpha-inducible protein 27-like protein 2 (133 aa).

3 consecutive transmembrane segments (helical) span residues 8–28, 51–71, and 73–93; these read AAIGGALAVAAVPAVLGAVGF, GGGVAAGSLVATLQSVGAAGL, and TSSNILLGSIGSAFGALLGGA. Positions 93 to 133 are disordered; the sequence is AKRASPSPPPGGPRPEGEQPGENVPQVEPPKSPLGPEKHEK.

It belongs to the IFI6/IFI27 family.

The protein localises to the mitochondrion membrane. In terms of biological role, plays a role in the apoptotic process and has a pro-apoptotic activity. The polypeptide is Interferon alpha-inducible protein 27-like protein 2 (Bos taurus (Bovine)).